The primary structure comprises 405 residues: MALVVQKYGGTSVGDLERIHKVAQRIAHYREKGHRLAVVVSAMGHTTDELIALAKRVNPRPPFRELDLLTTTGEQVSVALLSMQLWAMGIPAKGFVQHQIGITTDGRYGDARILEVNPARIREALDQGFVAVIAGFMGTTPEGEITTLGRGGSDTTAVAIAAALGAKECEIYTDTEGVYTTDPHLIPEARKLSVIGYDQMLEMAALGARVLHPRAVYYAKRYGVVLHVRSSFSYNPGTLVKEVAMEMDKAVTGVALDLDHAQIGLIGIPDQPGIAAKVFQALAERGIAVDMIIQGVPGHDPSRQQMAFTVKKDFAQEALEALEPVLAEIGGEAILRPDIAKVSIVGVGLASTPEVPAKMFQAVASTGANIEMIATSEVRISVIIPAEYAEAALRAVHQAFELDKA.

Position 7 to 10 (7 to 10) interacts with ATP; it reads KYGG. 25–30 is a binding site for substrate; that stretch reads RIAHYR. Position 41 (serine 41) interacts with ATP. Substrate is bound by residues 47-49, glutamate 74, 125-126, 150-153, and serine 153; these read TDE, LD, and RGGS. ATP contacts are provided by residues 173-174, 179-184, and arginine 209; these read TD and YTTDPH. ACT domains lie at 263 to 342 and 344 to 405; these read IGLI…IAKV and IVGV…LDKA. Residues aspartate 270, 274–275, 288–290, glutamine 294, 355–356, 369–370, and 376–377 each bind substrate; these read IA, AVD, VP, NI, and SE.

This sequence belongs to the aspartokinase family. Heterotetramer consisting of 2 isoforms Alpha (catalytic and regulation) and of a homodimer of 2 isoforms Beta (regulation and thermostability).

The catalysed reaction is L-aspartate + ATP = 4-phospho-L-aspartate + ADP. It participates in amino-acid biosynthesis; L-lysine biosynthesis via DAP pathway; (S)-tetrahydrodipicolinate from L-aspartate: step 1/4. The protein operates within amino-acid biosynthesis; L-methionine biosynthesis via de novo pathway; L-homoserine from L-aspartate: step 1/3. It functions in the pathway amino-acid biosynthesis; L-threonine biosynthesis; L-threonine from L-aspartate: step 1/5. Inhibited by threonine. In terms of biological role, catalyzes the phosphorylation of the beta-carboxyl group of aspartic acid with ATP to yield 4-phospho-L-aspartate, which is involved in the branched biosynthetic pathway leading to the biosynthesis of amino acids threonine, isoleucine and methionine. The polypeptide is Aspartokinase (ask) (Thermus thermophilus).